The chain runs to 243 residues: NEDD4-binding protein 2-like 1 (243 aa).

The segment at 1–38 (MEDSFLQSFGRLSLQPQQQQQRQRPPRPPPRGTPPRRH) is disordered.

In terms of assembly, interacts with dynactin subunit proteins, including DCTN4, DCTN5 and DCTN5.

Functionally, might play a role in adipocyte differentiation and triglyceride accumulation. This is NEDD4-binding protein 2-like 1 (N4BP2L1) from Homo sapiens (Human).